Consider the following 291-residue polypeptide: ATP synthase gamma chain (291 aa).

The protein belongs to the ATPase gamma chain family. As to quaternary structure, F-type ATPases have 2 components, CF(1) - the catalytic core - and CF(0) - the membrane proton channel. CF(1) has five subunits: alpha(3), beta(3), gamma(1), delta(1), epsilon(1). CF(0) has three main subunits: a, b and c.

It is found in the cell inner membrane. Its function is as follows. Produces ATP from ADP in the presence of a proton gradient across the membrane. The gamma chain is believed to be important in regulating ATPase activity and the flow of protons through the CF(0) complex. The polypeptide is ATP synthase gamma chain (Sulfurihydrogenibium sp. (strain YO3AOP1)).